The sequence spans 1099 residues: Solute carrier family 12 member 1 (1099 aa).

Residues 1–177 (MSLNNSSNVF…EDDQAGVVKF (177 aa)) lie on the Cytoplasmic side of the membrane. The RFXV motif signature appears at 20 to 23 (RFQV). The disordered stretch occupies residues 31 to 53 (ESSAAADDNTDPPHYEETSFGDE). Phosphoserine is present on Ser61. Ser91 carries the post-translational modification Phosphoserine; by OXSR1 and STK39. Thr95 is modified (phosphothreonine). Residues Thr100 and Thr105 each carry the phosphothreonine; by OXSR1 and STK39 modification. Thr118 bears the Phosphothreonine mark. Ser120 bears the Phosphoserine mark. Ser130 carries the phosphoserine; by AMPK modification. A Phosphoserine modification is found at Ser148. A helical membrane pass occupies residues 178-198 (GWVKGVLVRCMLNIWGVMLFI). Topologically, residues 199-201 (RLS) are extracellular. A helical transmembrane segment spans residues 202 to 222 (WIVGEAGIGLGVLIILLSTMV). Residues 223 to 259 (TSITGLSTSAIATNGFVRGGGAYYLISRSLGPEFGGS) lie on the Cytoplasmic side of the membrane. A helical transmembrane segment spans residues 260 to 280 (IGLIFAFANAVAVAMYVVGFA). The Extracellular portion of the chain corresponds to 281-302 (ETVVDLLKESDSMMVDPTNDIR). The chain crosses the membrane as a helical span at residues 303–323 (IIGSITVVILLGISVAGMEWE). The Cytoplasmic segment spans residues 324–327 (AKAQ). Residues 328–348 (VILLVILLIAIANFFIGTVIP) traverse the membrane as a helical segment. Residues 349–379 (SNNEKKSRGFFNYQASIFAENFGPRFTKGEG) lie on the Extracellular side of the membrane. A helical transmembrane segment spans residues 380-400 (FFSVFAIFFPAATGILAGANI). At 401–417 (SGDLEDPQDAIPRGTML) the chain is on the cytoplasmic side. A helical transmembrane segment spans residues 418-438 (AIFITTVAYLGVAICVGACVV). Residues 439 to 550 (RDATGNMNDT…NNEPLRGYIL (112 aa)) are Extracellular-facing. Asn446 and Asn456 each carry an N-linked (GlcNAc...) asparagine glycan. The next 2 helical transmembrane spans lie at 551–571 (TFLIAMAFILIAELNTIAPII) and 572–592 (SNFFLASYALINFSCFHASYA). Residues 593 to 609 (KSPGWRPAYGIYNMWVS) lie on the Extracellular side of the membrane. The chain crosses the membrane as a helical span at residues 610–630 (LFGAVLCCAVMFVINWWAAVI). Residues 631–1099 (TYVIEFFLYV…NHKNVLTFYS (469 aa)) lie on the Cytoplasmic side of the membrane.

The protein belongs to the SLC12A transporter family. When phosphorylated, interacts with PPP3CB. Post-translationally, phosphorylated at Ser-91, Thr-100 and Thr-105 by OXSR1/OSR1 and STK39/SPAK downstream of WNK kinases (WNK1, WNK2, WNK3 or WNK4), promoting its activity. Kidney; localizes to the thick ascending limbs (at protein level).

The protein localises to the apical cell membrane. The catalysed reaction is K(+)(out) + 2 chloride(out) + Na(+)(out) = K(+)(in) + 2 chloride(in) + Na(+)(in). Its activity is regulated as follows. Activated following phosphorylation by OXSR1/OSR1 and STK39/SPAK downstream of WNK kinases (WNK1, WNK2, WNK3 or WNK4). Renal sodium, potassium and chloride ion cotransporter that mediates the transepithelial NaCl reabsorption in the thick ascending limb and plays an essential role in the urinary concentration and volume regulation. Electrically silent transporter system. This Homo sapiens (Human) protein is Solute carrier family 12 member 1 (SLC12A1).